The sequence spans 257 residues: 3-deoxy-manno-octulosonate cytidylyltransferase (257 aa).

It belongs to the KdsB family.

It is found in the cytoplasm. The enzyme catalyses 3-deoxy-alpha-D-manno-oct-2-ulosonate + CTP = CMP-3-deoxy-beta-D-manno-octulosonate + diphosphate. It functions in the pathway nucleotide-sugar biosynthesis; CMP-3-deoxy-D-manno-octulosonate biosynthesis; CMP-3-deoxy-D-manno-octulosonate from 3-deoxy-D-manno-octulosonate and CTP: step 1/1. Its pathway is bacterial outer membrane biogenesis; lipopolysaccharide biosynthesis. Functionally, activates KDO (a required 8-carbon sugar) for incorporation into bacterial lipopolysaccharide in Gram-negative bacteria. The protein is 3-deoxy-manno-octulosonate cytidylyltransferase of Xylella fastidiosa (strain 9a5c).